Reading from the N-terminus, the 330-residue chain is Glycerol-3-phosphate dehydrogenase [NAD(P)+] (330 aa).

NADPH is bound by residues S10, W11, R31, and K104. Positions 104, 131, and 133 each coordinate sn-glycerol 3-phosphate. A135 serves as a coordination point for NADPH. 5 residues coordinate sn-glycerol 3-phosphate: K186, D239, S249, R250, and N251. The Proton acceptor role is filled by K186. R250 serves as a coordination point for NADPH. NADPH contacts are provided by V274 and E276.

It belongs to the NAD-dependent glycerol-3-phosphate dehydrogenase family.

It is found in the cytoplasm. The catalysed reaction is sn-glycerol 3-phosphate + NAD(+) = dihydroxyacetone phosphate + NADH + H(+). The enzyme catalyses sn-glycerol 3-phosphate + NADP(+) = dihydroxyacetone phosphate + NADPH + H(+). The protein operates within membrane lipid metabolism; glycerophospholipid metabolism. Catalyzes the reduction of the glycolytic intermediate dihydroxyacetone phosphate (DHAP) to sn-glycerol 3-phosphate (G3P), the key precursor for phospholipid synthesis. The sequence is that of Glycerol-3-phosphate dehydrogenase [NAD(P)+] from Thermoanaerobacter sp. (strain X514).